The primary structure comprises 434 residues: Ribosomal protein uS12 methylthiotransferase RimO (434 aa).

The region spanning alanine 2–proline 112 is the MTTase N-terminal domain. [4Fe-4S] cluster contacts are provided by cysteine 11, cysteine 47, cysteine 76, cysteine 142, cysteine 146, and cysteine 149. The Radical SAM core domain occupies leucine 128–arginine 365. One can recognise a TRAM domain in the interval glutamine 368–alanine 434.

The protein belongs to the methylthiotransferase family. RimO subfamily. The cofactor is [4Fe-4S] cluster.

It localises to the cytoplasm. It carries out the reaction L-aspartate(89)-[ribosomal protein uS12]-hydrogen + (sulfur carrier)-SH + AH2 + 2 S-adenosyl-L-methionine = 3-methylsulfanyl-L-aspartate(89)-[ribosomal protein uS12]-hydrogen + (sulfur carrier)-H + 5'-deoxyadenosine + L-methionine + A + S-adenosyl-L-homocysteine + 2 H(+). Its function is as follows. Catalyzes the methylthiolation of an aspartic acid residue of ribosomal protein uS12. This chain is Ribosomal protein uS12 methylthiotransferase RimO, found in Thermus thermophilus (strain ATCC BAA-163 / DSM 7039 / HB27).